A 377-amino-acid chain; its full sequence is Probable isocitrate dehydrogenase [NAD] subunit alpha, mitochondrial (377 aa).

The substrate site is built by arginine 131, arginine 141, arginine 162, and aspartate 249. Mg(2+) is bound by residues aspartate 249, aspartate 273, and aspartate 277.

Belongs to the isocitrate and isopropylmalate dehydrogenases family. Heterooligomer of subunits alpha, beta, and gamma in the apparent ratio of 2:1:1. Requires Mg(2+) as cofactor. The cofactor is Mn(2+).

The protein resides in the mitochondrion. The catalysed reaction is D-threo-isocitrate + NAD(+) = 2-oxoglutarate + CO2 + NADH. Functionally, probable catalytic subunit of the enzyme which catalyzes the decarboxylation of isocitrate (ICT) into alpha-ketoglutarate. This chain is Probable isocitrate dehydrogenase [NAD] subunit alpha, mitochondrial, found in Drosophila melanogaster (Fruit fly).